A 162-amino-acid chain; its full sequence is 2-C-methyl-D-erythritol 2,4-cyclodiphosphate synthase (162 aa).

Positions 12 and 14 each coordinate a divalent metal cation. Residues Asp-12–His-14 and His-38–Ser-39 contribute to the 4-CDP-2-C-methyl-D-erythritol 2-phosphate site. Residue His-46 coordinates a divalent metal cation. Residues Asp-60–Gly-62, Phe-65–Asp-69, Phe-143, and Arg-146 contribute to the 4-CDP-2-C-methyl-D-erythritol 2-phosphate site.

This sequence belongs to the IspF family. As to quaternary structure, homotrimer. A divalent metal cation is required as a cofactor.

It carries out the reaction 4-CDP-2-C-methyl-D-erythritol 2-phosphate = 2-C-methyl-D-erythritol 2,4-cyclic diphosphate + CMP. Its pathway is isoprenoid biosynthesis; isopentenyl diphosphate biosynthesis via DXP pathway; isopentenyl diphosphate from 1-deoxy-D-xylulose 5-phosphate: step 4/6. Its function is as follows. Involved in the biosynthesis of isopentenyl diphosphate (IPP) and dimethylallyl diphosphate (DMAPP), two major building blocks of isoprenoid compounds. Catalyzes the conversion of 4-diphosphocytidyl-2-C-methyl-D-erythritol 2-phosphate (CDP-ME2P) to 2-C-methyl-D-erythritol 2,4-cyclodiphosphate (ME-CPP) with a corresponding release of cytidine 5-monophosphate (CMP). The sequence is that of 2-C-methyl-D-erythritol 2,4-cyclodiphosphate synthase from Azoarcus sp. (strain BH72).